The following is a 409-amino-acid chain: MPFSSEQFTTKLNTLEDSQESISSASKWLLLQYRDAPKVAEMWKEYMLRPSVNTRRKLLGLYLMNHVVQQAKGQKIIQFQDSFGKVAAEVLGRINQEFPRDLKKKLSRVVNILKERNIFSKQVVNDIERSLKTESSPVEALVLPQKLKDFAKDYEKLVKMHHNVCAMKMRFDKSSDELDPSSSVYEENFKTISKIGNMAKDIINESILKRESGIHKLQSTLDDEKRHLDEEQNMLSEIEFVLSAKDPSRLNKNVDEDNIIPTYEVGDGDDDDDDGDNDDDDDDDDDDKNYDDRSNDSNYGVTNISTTDKKNEVVEKTDSEHKNSTHNPSDNQFGMKRTHDMIGHDDANDIPEKKVHLDSKTSEDGTFNSEDGHYELDIEGHVGAQTDEGVENSGGVSSSIQDLLSKLAN.

The CID domain occupies 1 to 135 (MPFSSEQFTT…DIERSLKTES (135 aa)). The disordered stretch occupies residues 250 to 409 (LNKNVDEDNI…IQDLLSKLAN (160 aa)). Positions 266 to 289 (GDGDDDDDDGDNDDDDDDDDDDKN) are enriched in acidic residues. 3 stretches are compositionally biased toward basic and acidic residues: residues 307-323 (TDKK…EHKN), 337-363 (RTHD…KTSE), and 370-380 (EDGHYELDIEG).

The protein belongs to the UPF0400 (RTT103) family. In terms of assembly, interacts with PCF11, RAI1, RAT1, RPO21 and RBP2.

Its subcellular location is the nucleus. Involved in transcription termination by RNA polymerase II and in regulation of Ty1 transposition. The chain is Regulator of Ty1 transposition protein 103 (RTT103) from Saccharomyces cerevisiae (strain ATCC 204508 / S288c) (Baker's yeast).